A 151-amino-acid chain; its full sequence is Large ribosomal subunit protein bL9 (151 aa).

Belongs to the bacterial ribosomal protein bL9 family.

Functionally, binds to the 23S rRNA. This is Large ribosomal subunit protein bL9 from Carboxydothermus hydrogenoformans (strain ATCC BAA-161 / DSM 6008 / Z-2901).